The primary structure comprises 309 residues: Mitochondrial phosphate carrier protein 1, mitochondrial (309 aa).

The Mitochondrial intermembrane segment spans residues 1-15 (MTRVKSKLDEELSSP). Residues 16-36 (WFYTVCTMGGMLSAGTTHLAI) traverse the membrane as a helical segment. 3 Solcar repeats span residues 16–100 (WFYT…FKTL), 109–193 (NRTS…SVEF), and 210–289 (QQLG…IKVL). Over 37 to 74 (TPLDVLKVNMQVNPVKYNSIPSGFSTLLREHGHSYLWR) the chain is Mitochondrial matrix. A helical transmembrane segment spans residues 75-94 (GWSGKLLGYGVQGGCRFGLY). The Mitochondrial intermembrane portion of the chain corresponds to 95–111 (EYFKTLYSDVLPNHNRT). Residues 112 to 132 (SIYFLSSASAQIFADMALCPF) traverse the membrane as a helical segment. Topologically, residues 133–167 (EAIKVRVQTQPMFAKGLLDGFPRVYRSEGLAGFHR) are mitochondrial matrix. Residues 168 to 187 (GLFPLWCRNLPFSMVMFSTF) traverse the membrane as a helical segment. The Mitochondrial intermembrane portion of the chain corresponds to 188 to 208 (EQSVEFIYQKIIQKRKQDCSK). The helical transmembrane segment at 209–229 (AQQLGVTCLAGYTAGAVGTII) threads the bilayer. At 230–268 (SNPADVVLSSLYNNKAKNVLQAVRNIGFVGLFTRSLPVR) the chain is on the mitochondrial matrix side. The chain crosses the membrane as a helical span at residues 269–289 (ITIVGPVITLQWFFYDAIKVL). Topologically, residues 290–309 (SGFPTSGGVKKPVDAAKLSV) are mitochondrial intermembrane.

Belongs to the mitochondrial carrier (TC 2.A.29) family. Expressed in stems, leaves and flowers. Strong expression in the stamens of flowers.

It is found in the mitochondrion inner membrane. Transport of phosphate groups from the cytosol to the mitochondrial matrix. Mediates salt stress tolerance through an ATP-dependent pathway and via modulation of the gibberellin metabolism. The sequence is that of Mitochondrial phosphate carrier protein 1, mitochondrial (MPT1) from Arabidopsis thaliana (Mouse-ear cress).